A 466-amino-acid chain; its full sequence is Neuraminidase (466 aa).

Residues 1-11 are Intravirion-facing; sequence MLPSTIQTLTL. The helical transmembrane segment at 12–34 threads the bilayer; that stretch reads FLTSGGVLLSLYVSASLSYLLYS. The tract at residues 13–35 is involved in apical transport and lipid raft association; it reads LTSGGVLLSLYVSASLSYLLYSD. Residues 35–466 are Virion surface-facing; it reads DILLKFSPTK…DTVTGVDMAL (432 aa). The hypervariable stalk region stretch occupies residues 38-86; the sequence is LKFSPTKRTAPTMSLECVNVSNAQAVNHSATKEMTFLLPEPEWTYPRLS. 2 N-linked (GlcNAc...) asparagine; by host glycosylation sites follow: N56 and N64. 8 disulfide bridges follow: C87/C420, C122/C127, C182/C229, C231/C236, C277/C291, C279/C289, C318/C337, and C424/C447. Positions 89–466 are head of neuraminidase; the sequence is GSTFQKALLI…DTVTGVDMAL (378 aa). Substrate is bound at residue R116. The N-linked (GlcNAc...) asparagine; by host glycan is linked to N144. The active-site Proton donor/acceptor is D149. A substrate-binding site is contributed by R150. 275–276 contacts substrate; the sequence is EE. The N-linked (GlcNAc...) asparagine; by host glycan is linked to N284. Residue R292 coordinates substrate. Positions 293 and 324 each coordinate Ca(2+). Position 374 (R374) interacts with substrate. Y409 acts as the Nucleophile in catalysis.

It belongs to the glycosyl hydrolase 34 family. In terms of assembly, homotetramer. Ca(2+) serves as cofactor. In terms of processing, N-glycosylated.

It is found in the virion membrane. It localises to the host apical cell membrane. It carries out the reaction Hydrolysis of alpha-(2-&gt;3)-, alpha-(2-&gt;6)-, alpha-(2-&gt;8)- glycosidic linkages of terminal sialic acid residues in oligosaccharides, glycoproteins, glycolipids, colominic acid and synthetic substrates.. Inhibited by the neuraminidase inhibitors zanamivir (Relenza) and oseltamivir (Tamiflu). These drugs interfere with the release of progeny virus from infected cells and are effective against all influenza strains. Resistance to neuraminidase inhibitors is quite rare. In terms of biological role, catalyzes the removal of terminal sialic acid residues from viral and cellular glycoconjugates. Cleaves off the terminal sialic acids on the glycosylated HA during virus budding to facilitate virus release. Additionally helps virus spread through the circulation by further removing sialic acids from the cell surface. These cleavages prevent self-aggregation and ensure the efficient spread of the progeny virus from cell to cell. Otherwise, infection would be limited to one round of replication. Described as a receptor-destroying enzyme because it cleaves a terminal sialic acid from the cellular receptors. May facilitate viral invasion of the upper airways by cleaving the sialic acid moieties on the mucin of the airway epithelial cells. Likely to plays a role in the budding process through its association with lipid rafts during intracellular transport. May additionally display a raft-association independent effect on budding. Plays a role in the determination of host range restriction on replication and virulence. Sialidase activity in late endosome/lysosome traffic seems to enhance virus replication. The polypeptide is Neuraminidase (Influenza B virus (strain B/Maryland/1959)).